Here is a 393-residue protein sequence, read N- to C-terminus: Short-chain dehydrogenase/reductase family 42E member 1 (393 aa).

Tyrosine 152 functions as the Proton acceptor in the catalytic mechanism. Lysine 156 is a binding site for NAD(+). The next 2 membrane-spanning stretches (helical) occupy residues 282 to 302 and 371 to 391; these read LPLT…FILG and GLVI…SVIL.

Belongs to the 3-beta-HSD family.

It localises to the membrane. The chain is Short-chain dehydrogenase/reductase family 42E member 1 (SDR42E1) from Bos taurus (Bovine).